A 938-amino-acid chain; its full sequence is Cyclin-dependent kinase-like 5 (938 aa).

A Protein kinase domain is found at 13–297 (FEILGVVGEG…TEQCLNHPTF (285 aa)). Residues 19-27 (VGEGAYGVV) and Lys-42 each bind ATP. The Proton acceptor role is filled by Asp-135. Disordered regions lie at residues 298–348 (QTQR…DIQN), 382–566 (KTYQ…RHSK), 646–865 (SPQP…LTAQ), and 877–938 (HPLS…KWKQ). 2 stretches are compositionally biased toward polar residues: residues 319–331 (ESST…QSTK) and 382–402 (KTYQ…NNNI). Ser-407 carries the phosphoserine modification. A compositionally biased stretch (basic and acidic residues) spans 407-417 (SPKEAKSKTEF). 3 stretches are compositionally biased toward polar residues: residues 434–462 (LKSS…QPSE), 473–482 (IPQSSRSPSY), and 494–548 (DSKS…SGRN). Ser-479 is modified (phosphoserine). 2 stretches are compositionally biased toward basic and acidic residues: residues 549-559 (NRNEGTLDSRR) and 679-704 (QKSE…RHLY). Residue Ser-720 is modified to Phosphoserine. Over residues 728–748 (HENNVSTRVSSLPSDSSSGTN) the composition is skewed to polar residues. Ser-761 carries the post-translational modification Phosphoserine. 2 stretches are compositionally biased toward basic and acidic residues: residues 769–778 (DQLKEKEKQG) and 817–827 (RPKEWRPEKLS). Positions 880–891 (SQATGGSSNIRQ) are enriched in polar residues.

The protein belongs to the protein kinase superfamily. CMGC Ser/Thr protein kinase family. CDC2/CDKX subfamily. Interacts with MECP2. In terms of processing, autophosphorylated.

The protein resides in the nucleus. It localises to the cytoplasm. It is found in the cytoskeleton. Its subcellular location is the cilium basal body. The protein localises to the microtubule organizing center. The protein resides in the centrosome. It catalyses the reaction L-seryl-[protein] + ATP = O-phospho-L-seryl-[protein] + ADP + H(+). The catalysed reaction is L-threonyl-[protein] + ATP = O-phospho-L-threonyl-[protein] + ADP + H(+). Its function is as follows. Mediates phosphorylation of MECP2. May regulate ciliogenesis. The protein is Cyclin-dependent kinase-like 5 of Mus musculus (Mouse).